The following is a 118-amino-acid chain: MICOS complex subunit MIC13 (118 aa).

The Mitochondrial matrix portion of the chain corresponds to 1–7 (MVARVWS). Residues 8–26 (LMRFLIKGSVAGGAVYLVY) traverse the membrane as a helical segment. The Mitochondrial intermembrane portion of the chain corresponds to 27–118 (DQELLGPSDK…GWEYVKARTK (92 aa)).

Belongs to the MICOS complex subunit Mic13 family. In terms of assembly, component of the mitochondrial contact site and cristae organizing system (MICOS) complex, composed of at least MICOS10/MIC10, CHCHD3/MIC19, CHCHD6/MIC25, APOO/MIC26, MICOS13/MIC13, APOOL/MIC27 and IMMT/MIC60. The complex associates with mitochondrial outer membrane proteins SAMM50, MTX1 and MTX2, and with HSPA9.

It is found in the mitochondrion inner membrane. Component of the MICOS complex, a large protein complex of the mitochondrial inner membrane that plays crucial roles in the maintenance of crista junctions, inner membrane architecture, and formation of contact sites to the outer membrane. Constituent of mature MICOS complex, it is required for the formation of cristae junction (CJ) and maintenance of cristae morphology. Required for the incorporation of MICOS10/MIC10 into the MICOS complex. The polypeptide is MICOS complex subunit MIC13 (Macaca fascicularis (Crab-eating macaque)).